Here is a 929-residue protein sequence, read N- to C-terminus: Synaptopodin (929 aa).

Position 1 is an N-acetylmethionine (methionine 1). Residues methionine 1–alanine 12 are compositionally biased toward pro residues. The tract at residues methionine 1–lysine 260 is disordered. Composition is skewed to basic and acidic residues over residues glycine 60–alanine 69 and serine 91–valine 110. Residue serine 140 is modified to Phosphoserine. Residues threonine 142–alanine 151 are compositionally biased toward basic and acidic residues. Positions arginine 152–glycine 170 are enriched in polar residues. The residue at position 207 (serine 207) is a Phosphoserine. A compositionally biased stretch (pro residues) spans glutamate 224 to glutamine 234. Position 263 is a phosphoserine (serine 263). The interval glycine 285 to alanine 389 is disordered. A compositionally biased stretch (low complexity) spans leucine 317–serine 332. A glycan (N-linked (GlcNAc...) asparagine) is linked at asparagine 330. The span at histidine 333 to serine 379 shows a compositional bias: polar residues. Phosphoserine is present on residues serine 501 and serine 525. Residues phenylalanine 509 to asparagine 558 form a disordered region. Threonine 560 carries the phosphothreonine modification. The PPxY motif signature appears at proline 562–tyrosine 565. At serine 580 the chain carries Phosphoserine. A PPxY motif motif is present at residues proline 581 to tyrosine 584. 2 disordered regions span residues proline 589–isoleucine 610 and lysine 630–glutamate 726. A compositionally biased stretch (basic and acidic residues) spans alanine 646–glycine 656. A phosphoserine mark is found at serine 685, serine 702, and tyrosine 738. Positions serine 685–serine 698 are enriched in low complexity. Residues isoleucine 740 to tryptophan 763 are disordered. Threonine 746 is modified (phosphothreonine). Serine 754, serine 758, and serine 779 each carry phosphoserine. Threonine 783 is modified (phosphothreonine). 8 positions are modified to phosphoserine: proline 784, threonine 804, arginine 812, lysine 826, serine 833, serine 854, proline 871, and proline 894. Over residues lysine 826–serine 839 the composition is skewed to low complexity. Positions lysine 826–glycine 916 are disordered. The segment covering glycine 866–alanine 880 has biased composition (polar residues).

This sequence belongs to the synaptopodin family. As to quaternary structure, interacts with BAIAP1. Interacts with actin. Interacts (via PPxY motifs) with WWC1 (via WW domains). Post-translationally, O-glycosylated. Expressed in cerebral cortex.

It localises to the cytoplasm. Its subcellular location is the cytoskeleton. The protein localises to the cell junction. The protein resides in the tight junction. It is found in the perikaryon. It localises to the cell projection. Its subcellular location is the dendritic spine. The protein localises to the postsynaptic density. The protein resides in the synapse. It is found in the cytosol. Actin-associated protein that may play a role in modulating actin-based shape and motility of dendritic spines and renal podocyte foot processes. Seems to be essential for the formation of spine apparatuses in spines of telencephalic neurons, which is involved in synaptic plasticity. The chain is Synaptopodin (SYNPO) from Homo sapiens (Human).